Consider the following 446-residue polypeptide: Tetratricopeptide repeat protein 23 (446 aa).

4 TPR repeats span residues 45 to 78, 137 to 170, 186 to 219, and 356 to 389; these read LHLC…TKIC, LELF…SKEM, SRIK…TETT, and AETY…ETFL.

Associated with the EvC complex composed of EFCAB7, IQCE, EVC2 and EVC.

It localises to the cell projection. The protein resides in the cilium. In terms of biological role, participates positively in the ciliary Hedgehog (Hh) signaling. In Rattus norvegicus (Rat), this protein is Tetratricopeptide repeat protein 23 (Ttc23).